The primary structure comprises 174 residues: Gamma-crystallin A (174 aa).

Beta/gamma crystallin 'Greek key' domains are found at residues 2–40 (GKIT…RVDS) and 41–83 (GCWM…RSIP). A connecting peptide region spans residues 84–87 (YTSS). 2 consecutive Beta/gamma crystallin 'Greek key' domains span residues 88 to 128 (HRIR…HVLE) and 129 to 171 (GSWV…RRVM).

It belongs to the beta/gamma-crystallin family.

Crystallins are the dominant structural components of the vertebrate eye lens. The protein is Gamma-crystallin A (Cryga) of Rattus norvegicus (Rat).